Consider the following 307-residue polypeptide: Glutaminase 1 (307 aa).

Substrate contacts are provided by S62, N114, E159, N166, Y190, Y242, and V260.

It belongs to the glutaminase family. In terms of assembly, homotetramer.

It carries out the reaction L-glutamine + H2O = L-glutamate + NH4(+). The sequence is that of Glutaminase 1 from Clostridium perfringens (strain 13 / Type A).